The primary structure comprises 223 residues: MELYLDTASLEEIREIAAWGVLSGVTTNPTLVAKVFAAKGEALTEEAFAAHLRAICETVGGPVSAEVTALEAEAMVAEGRRLAAIHPQIVVKLPTTEEGLKACKRLSAEGIRVNMTLIFSANQALLAARAGASYVSPFLGRVDDISWDGGELLREIVEMIQVQDLPVKVIAASIRHPRHVTEAALLGADIATMPHAVFKQLLKHPLTDIGLKRFLEDWEKVKP.

The active-site Schiff-base intermediate with substrate is lysine 92.

This sequence belongs to the transaldolase family. Type 3B subfamily.

It is found in the cytoplasm. It catalyses the reaction D-sedoheptulose 7-phosphate + D-glyceraldehyde 3-phosphate = D-erythrose 4-phosphate + beta-D-fructose 6-phosphate. It functions in the pathway carbohydrate degradation; pentose phosphate pathway; D-glyceraldehyde 3-phosphate and beta-D-fructose 6-phosphate from D-ribose 5-phosphate and D-xylulose 5-phosphate (non-oxidative stage): step 2/3. In terms of biological role, transaldolase is important for the balance of metabolites in the pentose-phosphate pathway. This Thermus thermophilus (strain ATCC BAA-163 / DSM 7039 / HB27) protein is Probable transaldolase.